We begin with the raw amino-acid sequence, 196 residues long: DnaA initiator-associating protein DiaA (196 aa).

An SIS domain is found at 34–196 (LVQSLLNGNK…DNTLFPHQDD (163 aa)).

This sequence belongs to the SIS family. DiaA subfamily. Homotetramer; dimer of dimers.

Its function is as follows. Required for the timely initiation of chromosomal replication via direct interactions with the DnaA initiator protein. The protein is DnaA initiator-associating protein DiaA of Yersinia enterocolitica serotype O:8 / biotype 1B (strain NCTC 13174 / 8081).